Here is a 177-residue protein sequence, read N- to C-terminus: Large ribosomal subunit protein uL6 (177 aa).

The protein belongs to the universal ribosomal protein uL6 family. As to quaternary structure, part of the 50S ribosomal subunit.

This protein binds to the 23S rRNA, and is important in its secondary structure. It is located near the subunit interface in the base of the L7/L12 stalk, and near the tRNA binding site of the peptidyltransferase center. This chain is Large ribosomal subunit protein uL6, found in Vibrio cholerae serotype O1 (strain ATCC 39541 / Classical Ogawa 395 / O395).